The chain runs to 406 residues: tRNA-specific 2-thiouridylase MnmA (406 aa).

ATP is bound by residues 42–49 and leucine 68; that span reads GLSGGVDS. The active-site Nucleophile is the cysteine 129. Cysteine 129 and cysteine 239 are oxidised to a cystine. Glycine 154 serves as a coordination point for ATP. Residues 189–191 form an interaction with tRNA region; the sequence is KDQ. Cysteine 239 acts as the Cysteine persulfide intermediate in catalysis. Residues 344–345 are interaction with tRNA; it reads RY.

This sequence belongs to the MnmA/TRMU family.

It is found in the cytoplasm. It catalyses the reaction S-sulfanyl-L-cysteinyl-[protein] + uridine(34) in tRNA + AH2 + ATP = 2-thiouridine(34) in tRNA + L-cysteinyl-[protein] + A + AMP + diphosphate + H(+). Its function is as follows. Catalyzes the 2-thiolation of uridine at the wobble position (U34) of tRNA, leading to the formation of s(2)U34. In Prochlorococcus marinus (strain SARG / CCMP1375 / SS120), this protein is tRNA-specific 2-thiouridylase MnmA.